We begin with the raw amino-acid sequence, 141 residues long: Hemoglobin subunit alpha (141 aa).

The Globin domain occupies 1-141 (VLSAADKGNV…VSTVLTSKYR (141 aa)). Position 3 is a phosphoserine (S3). K7 and K11 each carry N6-succinyllysine. Position 16 is an N6-acetyllysine; alternate (K16). Residue K16 is modified to N6-succinyllysine; alternate. Residue Y24 is modified to Phosphotyrosine. Position 35 is a phosphoserine (S35). K40 is modified (N6-succinyllysine). H58 is a binding site for O2. Residue H87 participates in heme b binding. S102 carries the phosphoserine modification. A Phosphothreonine modification is found at T108. A phosphoserine mark is found at S124 and S131. T134 and T137 each carry phosphothreonine. The residue at position 138 (S138) is a Phosphoserine.

This sequence belongs to the globin family. As to quaternary structure, heterotetramer of two alpha chains and two beta chains. As to expression, red blood cells.

Its function is as follows. Involved in oxygen transport from the lung to the various peripheral tissues. Functionally, hemopressin acts as an antagonist peptide of the cannabinoid receptor CNR1. Hemopressin-binding efficiently blocks cannabinoid receptor CNR1 and subsequent signaling. The chain is Hemoglobin subunit alpha (HBA) from Macrotus californicus (Californian leaf-nosed bat).